The following is an 843-amino-acid chain: Protein P (843 aa).

The terminal protein domain (TP) stretch occupies residues 1–177; sequence MPLSYQHFRR…FCGSPYSWEQ (177 aa). Positions 178–346 are spacer; that stretch reads ELQHGSTSLN…YCLSHIINLL (169 aa). 2 disordered regions span residues 180–202 and 226–315; these read QHGS…AQSS and QHKQ…VGSE. Residues 239-249 are compositionally biased toward basic residues; that stretch reads RSGRLRSRVHT. 2 stretches are compositionally biased toward polar residues: residues 262–277 and 287–299; these read TGHS…SCFH and PSLS…TSTG. The segment at 347 to 690 is polymerase/reverse transcriptase domain (RT); it reads EDWGPCYEHG…YMNLYPVARQ (344 aa). The Reverse transcriptase domain occupies 357–600; that stretch reads EHHIRTPKTP…YSLHFMGYII (244 aa). Positions 429, 551, and 552 each coordinate Mg(2+).

It belongs to the hepadnaviridae P protein family.

The catalysed reaction is DNA(n) + a 2'-deoxyribonucleoside 5'-triphosphate = DNA(n+1) + diphosphate. The enzyme catalyses Endonucleolytic cleavage to 5'-phosphomonoester.. Activated by host HSP70 and HSP40 in vitro to be able to bind the epsilon loop of the pgRNA. Because deletion of the RNase H region renders the protein partly chaperone-independent, the chaperones may be needed indirectly to relieve occlusion of the RNA-binding site by this domain. Inhibited by several reverse-transcriptase inhibitors: Lamivudine, Adefovir and Entecavir. In terms of biological role, multifunctional enzyme that converts the viral RNA genome into dsDNA in viral cytoplasmic capsids. This enzyme displays a DNA polymerase activity that can copy either DNA or RNA templates, and a ribonuclease H (RNase H) activity that cleaves the RNA strand of RNA-DNA heteroduplexes in a partially processive 3'- to 5'-endonucleasic mode. Neo-synthesized pregenomic RNA (pgRNA) are encapsidated together with the P protein, and reverse-transcribed inside the nucleocapsid. Initiation of reverse-transcription occurs first by binding the epsilon loop on the pgRNA genome, and is initiated by protein priming, thereby the 5'-end of (-)DNA is covalently linked to P protein. Partial (+)DNA is synthesized from the (-)DNA template and generates the relaxed circular DNA (RC-DNA) genome. After budding and infection, the RC-DNA migrates in the nucleus, and is converted into a plasmid-like covalently closed circular DNA (cccDNA). The activity of P protein does not seem to be necessary for cccDNA generation, and is presumably released from (+)DNA by host nuclear DNA repair machinery. This chain is Protein P, found in Hepatitis B virus genotype H (isolate United States/LAS2523/2002) (HBV-H).